We begin with the raw amino-acid sequence, 620 residues long: MGRSKKRSRASSSRLNPLRKAGSNDNNKDTNVVNKKLQPLLQNLSSVVPNDRSIALSSISVLCEDAHMRQLLLKEKLVPIILNKLLNDSNSDIVVESFGLLRNLSLEEGYDVSIYLWRSDIWTSITSNFGRIVESLSALQAAEQQPQLKPAGKSKIESKRLLFDFADNLLSLVVALSNGSDDILNEILTESKINEIFQVISQLLKYGVEKLPINLFNTTLDLIYDLSSESFEFIDHVSNNELLSQFLNGLSPALHPQANELTKVLIEGIHCQFLDMKITYDQCNKMIHSVCHSINNIDPVQLVNDINNPVEIGPATSKDESSKVITKIKDYNAKRNESMIKLQSIEIAIDLITAIIEIVASKYESPESQEVAIPEELINTLTNFLPHVFMILKDTFTSRILIGWNNLIWLFVSLSLTELSGELLTTLWSYVTQLDSQDDLSIKIGRMGCIWALLKLIFPDGAFESENRALINVQMLNNSGFARGIIEEFQNNNDLELQQKCINVLSTYAMIQGQIDANKEIGQFFIQTLTQLNVRPEILIEMTNSLFQIYGDASYDYNEPIFVRGGFLSILKDQVVPNLRQQFKMVDKNKNPELKERCHDCFTTLDSFIHYKMNENSTNQ.

A disordered region spans residues 1–32 (MGRSKKRSRASSSRLNPLRKAGSNDNNKDTNV). 8 ARM repeats span residues 25 to 64 (DNNKDTNVVNKKLQPLLQNLSSVVPNDRSIALSSISVLCE), 66 to 106 (AHMR…NLSL), 181 to 221 (DDIL…TTLD), 258 to 299 (ANEL…NIDP), 340 to 386 (IKLQ…NFLP), 435 to 470 (DSQDDLSIKIGRMGCIWALLKLIFPDGAFESENRAL), 471 to 510 (INVQMLNNSGFARGIIEEFQNNNDLELQQKCINVLSTYAM), and 564 to 607 (RGGF…TLDS).

Belongs to the nuclear import and ribosome assembly adapter family. In terms of assembly, forms a heterotrimeric complex with RPL5 and RPL11A or RPL11B; interaction of this complex with KAP104 allows the nuclear import of the heterotrimer. Component of a hexameric 5S RNP precursor complex, composed of 5S RNA, RRS1, RPF2, RPL5, RPL11A/RPL11B and SYO1; this complex acts as a precursor for ribosome assembly.

The protein resides in the cytoplasm. Its subcellular location is the nucleus. Its function is as follows. Nuclear import adapter that specifically recruits the two functionally and topologically linked ribosomal proteins RPL5 and RPL11 (encoded by RPL11A and RPL11B). Guarantees that this cargo pair remains bound together from the time of synthesis in the cytoplasm until delivery to the nascent 5S rRNA in the nucleus. This Saccharomyces cerevisiae (strain ATCC 204508 / S288c) (Baker's yeast) protein is Synchronized import protein 1 (SYO1).